The sequence spans 213 residues: Translation initiation factor IF-3 (213 aa).

The tract at residues 193-213 is disordered; it reads EKIASLPPLPPDNSGEPEDDE.

This sequence belongs to the IF-3 family. In terms of assembly, monomer.

The protein localises to the cytoplasm. In terms of biological role, IF-3 binds to the 30S ribosomal subunit and shifts the equilibrium between 70S ribosomes and their 50S and 30S subunits in favor of the free subunits, thus enhancing the availability of 30S subunits on which protein synthesis initiation begins. The polypeptide is Translation initiation factor IF-3 (Chlorobaculum tepidum (strain ATCC 49652 / DSM 12025 / NBRC 103806 / TLS) (Chlorobium tepidum)).